The chain runs to 680 residues: HEAT repeat-containing protein 3 (680 aa).

The span at 1-11 (MGKSRTKRFKR) shows a compositional bias: basic residues. The segment at 1–39 (MGKSRTKRFKRPQFSPTGDCQAEAAAAANGTGGEEDDGP) is disordered. Phosphoserine is present on serine 15. Over residues 18–29 (GDCQAEAAAAAN) the composition is skewed to low complexity. 2 HEAT repeats span residues 38 to 69 (GPAAELLEKLQHPSAEVRECACAGLARLVQQR) and 74 to 110 (GLARRDAVRRLGPLLLDPSLAVRETAAGALRNLSACG). Residue serine 144 is modified to Phosphoserine. At threonine 340 the chain carries Phosphothreonine.

It belongs to the nuclear import and ribosome assembly adapter family. As to quaternary structure, component of a hexameric 5S RNP precursor complex, composed of 5S RNA, RRS1, RPF2/BXDC1, RPL5, RPL11 and HEATR3; this complex acts as a precursor for ribosome assembly.

Its function is as follows. Plays a role in ribosome biogenesis and in nuclear import of the 60S ribosomal protein L5/large ribosomal subunit protein uL18 (RPL5). Required for proper erythrocyte maturation. This is HEAT repeat-containing protein 3 (HEATR3) from Homo sapiens (Human).